The chain runs to 87 residues: Tan_10cys (87 aa).

Residues 1-21 form the signal peptide; that stretch reads MNLKVLFLLAMVLVTLCLGED. A propeptide spanning residues 22-27 is cleaved from the precursor; it reads RVTDRR.

This sequence belongs to the teretoxin C (TC) superfamily. In terms of processing, contains 5 disulfide bonds. In terms of tissue distribution, expressed by the venom duct.

The protein localises to the secreted. In Terebra anilis (Auger snail), this protein is Tan_10cys.